A 115-amino-acid chain; its full sequence is Large ribosomal subunit protein bL21 (115 aa).

Belongs to the bacterial ribosomal protein bL21 family. Part of the 50S ribosomal subunit. Contacts protein L20.

Its function is as follows. This protein binds to 23S rRNA in the presence of protein L20. The protein is Large ribosomal subunit protein bL21 of Picosynechococcus sp. (strain ATCC 27264 / PCC 7002 / PR-6) (Agmenellum quadruplicatum).